The primary structure comprises 61 residues: uncharacterized protein (61 aa).

Positions 1 to 40 (MRRGGEPQCDGREFRIASSPAREREDDNETAPPQTSAAQE) are disordered. Residues 9-25 (CDGREFRIASSPARERE) show a composition bias toward basic and acidic residues.

This is an uncharacterized protein from Caenorhabditis elegans.